We begin with the raw amino-acid sequence, 80 residues long: Large ribosomal subunit protein bL31B (80 aa).

It belongs to the bacterial ribosomal protein bL31 family. Type B subfamily. As to quaternary structure, part of the 50S ribosomal subunit.

This Shouchella clausii (strain KSM-K16) (Alkalihalobacillus clausii) protein is Large ribosomal subunit protein bL31B.